The following is a 150-amino-acid chain: Large ribosomal subunit protein bL9 (150 aa).

Belongs to the bacterial ribosomal protein bL9 family.

Binds to the 23S rRNA. In Shewanella frigidimarina (strain NCIMB 400), this protein is Large ribosomal subunit protein bL9.